We begin with the raw amino-acid sequence, 440 residues long: Xaa-Pro dipeptidase (440 aa).

Mn(2+) is bound by residues Asp244, Asp255, His335, Glu380, and Glu419.

It belongs to the peptidase M24B family. Bacterial-type prolidase subfamily. Mn(2+) serves as cofactor.

The catalysed reaction is Xaa-L-Pro dipeptide + H2O = an L-alpha-amino acid + L-proline. Its function is as follows. Splits dipeptides with a prolyl residue in the C-terminal position. In Shewanella baltica (strain OS195), this protein is Xaa-Pro dipeptidase.